The following is a 342-amino-acid chain: Renalase (342 aa).

The signal sequence occupies residues 1 to 17 (MAQVLIVGAGMTGSLCA). FAD-binding positions include Thr-12, Arg-42, and 61-62 (QY).

Belongs to the renalase family. FAD serves as cofactor. In terms of tissue distribution, secreted into the blood by the kidney. Highly expressed in the kidney, expressed at lower level in heart, skeletal muscle and small intestine. Its plasma concentration is markedly reduced in patients with end-stage renal disease, as compared with healthy subjects.

It is found in the secreted. It carries out the reaction 1,2-dihydro-beta-NAD + O2 + H(+) = H2O2 + NAD(+). It catalyses the reaction 1,2-dihydro-beta-NADP + O2 + H(+) = H2O2 + NADP(+). The enzyme catalyses 1,6-dihydro-beta-NADP + O2 + H(+) = H2O2 + NADP(+). The catalysed reaction is 1,6-dihydro-beta-NAD + O2 + H(+) = H2O2 + NAD(+). Catalyzes the oxidation of the less abundant 1,2-dihydro-beta-NAD(P) and 1,6-dihydro-beta-NAD(P) to form beta-NAD(P)(+). The enzyme hormone is secreted by the kidney, and circulates in blood and modulates cardiac function and systemic blood pressure. Lowers blood pressure in vivo by decreasing cardiac contractility and heart rate and preventing a compensatory increase in peripheral vascular tone, suggesting a causal link to the increased plasma catecholamine and heightened cardiovascular risk. High concentrations of catecholamines activate plasma renalase and promotes its secretion and synthesis. The polypeptide is Renalase (RNLS) (Homo sapiens (Human)).